The primary structure comprises 249 residues: NAD kinase (249 aa).

The Proton acceptor role is filled by Asp45. Residues Asp45–Gly46, Arg50, Asn110–Glu111, Asp138, and Ser149–Ser154 contribute to the NAD(+) site.

The protein belongs to the NAD kinase family. A divalent metal cation is required as a cofactor.

It localises to the cytoplasm. The catalysed reaction is NAD(+) + ATP = ADP + NADP(+) + H(+). Involved in the regulation of the intracellular balance of NAD and NADP, and is a key enzyme in the biosynthesis of NADP. Catalyzes specifically the phosphorylation on 2'-hydroxyl of the adenosine moiety of NAD to yield NADP. The sequence is that of NAD kinase from Saccharolobus islandicus (strain Y.N.15.51 / Yellowstone #2) (Sulfolobus islandicus).